Consider the following 123-residue polypeptide: Holo-[acyl-carrier-protein] synthase (123 aa).

Mg(2+) is bound by residues aspartate 8 and glutamate 56.

It belongs to the P-Pant transferase superfamily. AcpS family. Mg(2+) serves as cofactor.

It localises to the cytoplasm. It catalyses the reaction apo-[ACP] + CoA = holo-[ACP] + adenosine 3',5'-bisphosphate + H(+). Its function is as follows. Transfers the 4'-phosphopantetheine moiety from coenzyme A to a Ser of acyl-carrier-protein. This Clostridium beijerinckii (strain ATCC 51743 / NCIMB 8052) (Clostridium acetobutylicum) protein is Holo-[acyl-carrier-protein] synthase.